The primary structure comprises 210 residues: Large ribosomal subunit protein uL3 (210 aa).

It belongs to the universal ribosomal protein uL3 family. As to quaternary structure, part of the 50S ribosomal subunit. Forms a cluster with proteins L14 and L19.

Functionally, one of the primary rRNA binding proteins, it binds directly near the 3'-end of the 23S rRNA, where it nucleates assembly of the 50S subunit. This chain is Large ribosomal subunit protein uL3, found in Amoebophilus asiaticus (strain 5a2).